A 164-amino-acid chain; its full sequence is Ribosome maturation factor RimM (164 aa).

Residues 90-161 (KGSYFIADLI…TVTIKPLEIW (72 aa)) form the PRC barrel domain.

This sequence belongs to the RimM family. In terms of assembly, binds ribosomal protein uS19.

The protein localises to the cytoplasm. In terms of biological role, an accessory protein needed during the final step in the assembly of 30S ribosomal subunit, possibly for assembly of the head region. Essential for efficient processing of 16S rRNA. May be needed both before and after RbfA during the maturation of 16S rRNA. It has affinity for free ribosomal 30S subunits but not for 70S ribosomes. This is Ribosome maturation factor RimM from Clostridium botulinum (strain Hall / ATCC 3502 / NCTC 13319 / Type A).